The chain runs to 180 residues: UPF0398 protein YpsA (180 aa).

Belongs to the UPF0398 family.

The sequence is that of UPF0398 protein YpsA (ypsA) from Bacillus subtilis (strain 168).